The sequence spans 134 residues: Profilin-1 (134 aa).

Cysteines 13 and 118 form a disulfide. The short motif at 84 to 100 (AVIRGKKGSGGITIKKT) is the Involved in PIP2 interaction element. T114 bears the Phosphothreonine mark.

The protein belongs to the profilin family. Occurs in many kinds of cells as a complex with monomeric actin in a 1:1 ratio. Phosphorylated by MAP kinases.

It is found in the cytoplasm. Its subcellular location is the cytoskeleton. In terms of biological role, binds to actin and affects the structure of the cytoskeleton. At high concentrations, profilin prevents the polymerization of actin, whereas it enhances it at low concentrations. By binding to PIP2, it inhibits the formation of IP3 and DG. The sequence is that of Profilin-1 (PRO1) from Olea europaea (Common olive).